We begin with the raw amino-acid sequence, 459 residues long: Argininosuccinate lyase (459 aa).

The protein belongs to the lyase 1 family. Argininosuccinate lyase subfamily.

It localises to the cytoplasm. The enzyme catalyses 2-(N(omega)-L-arginino)succinate = fumarate + L-arginine. It participates in amino-acid biosynthesis; L-arginine biosynthesis; L-arginine from L-ornithine and carbamoyl phosphate: step 3/3. This Prochlorococcus marinus (strain MIT 9215) protein is Argininosuccinate lyase.